A 210-amino-acid polypeptide reads, in one-letter code: CLAVATA3/ESR (CLE)-related protein 4A-3 (210 aa).

The signal sequence occupies residues 1–21 (MAKNAMLCLLILRVVLALAFA). Residues 21–83 (ATNKKGDEEP…SNQLPNNNWM (63 aa)) are required for secretion from the host cytoplasm to the host apoplasm. An N-linked (GlcNAc...) asparagine glycan is attached at Asn-32. The interval 116 to 210 (RKTGMHSQRH…APAGPDPIHH (95 aa)) is disordered. Composition is skewed to basic and acidic residues over residues 125–137 (HHEETTLEQEKRV) and 144–200 (PIHH…EKRG). An A-1 repeat occupies 127–135 (EETTLEQEK). Residues 127–198 (EETTLEQEKR…HEDTTLEQEK (72 aa)) form a 4 X approximate repeat A region. Residues 136 to 147 (RVAGAGPDPIHH) form a CLE-1 repeat. Residues 136–210 (RVAGAGPDPI…APAGPDPIHH (75 aa)) form a 4 X approximate repeat CLE region. An A-2 repeat occupies 148-156 (QDTTLEQEK). One copy of the CLE-2 repeat lies at 157–168 (RAVPAGPDPKHH). The stretch at 169–177 (EETTLEQEK) is one A-3 repeat. The CLE-3 repeat unit spans residues 178–189 (RAVPAGPDPKHH). One copy of the A-4 repeat lies at 190-198 (EDTTLEQEK). One copy of the CLE-4 repeat lies at 199–210 (RGAPAGPDPIHH).

Belongs to the CLV3/ESR signal peptide family. In terms of tissue distribution, highly expressed exclusively within the dorsal esophageal gland cell during syncytium formation in host plants.

The protein localises to the secreted. It is found in the host cytoplasm. Its subcellular location is the host extracellular space. It localises to the extracellular space. The protein resides in the apoplast. In terms of biological role, mimics host plant CLE extracellular signal peptides that regulate cell fate. May play a role in the differentiation or division of feeding cells (syncytia) induced in plant roots during infection. This Globodera rostochiensis (Golden nematode worm) protein is CLAVATA3/ESR (CLE)-related protein 4A-3 (CLE-4A-3).